We begin with the raw amino-acid sequence, 494 residues long: Tripartite motif-containing protein 5 (494 aa).

Ala2 bears the N-acetylalanine mark. The RING-type zinc finger occupies 15-59; that stretch reads CPICLELLTEPLSLDCGHSFCQACITANHKESTLHQGERSCPLCR. Residue Ser86 is modified to Phosphoserine. The segment at 91–132 adopts a B box-type zinc-finger fold; it reads QKVDHCARHGEKLLLFCQQDGNVICWLCERSQEHRGHHTFLV. 4 residues coordinate Zn(2+): Cys96, His99, Cys118, and His124. Residues 132-223 are a coiled coil; sequence VEEVAEKYQG…RLVQSESDMV (92 aa). The interval 186–199 is required for interaction with GABARAP and for autophagy; that stretch reads FKQLRDILDCEESK. A B30.2/SPRY domain is found at 280–494; the sequence is PDLKGMLQAF…LPMTLCSPSS (215 aa).

Belongs to the TRIM/RBCC family. As to quaternary structure, can form homodimers and homotrimers. In addition to lower-order dimerization, also exhibits a higher-order multimerization and both low- and high-order multimerizations are essential for its restriction activity. Interacts with BTBD1 and BTBD2. Interacts with PSMC4, PSMC5, PSMD7 and HSPA8/HSC70. Interacts (via B30.2/SPRY domain) with HSPA1A/B. Interacts with PSMC2, MAP3K7/TAK1, TAB2 and TAB3. Interacts with SQSTM1. Interacts with TRIM6 and TRIM34. Interacts with ULK1 (phosphorylated form), GABARAP, GABARAPL1, GABARAPL2, MAP1LC3A, MAP1LC3C and BECN1. In terms of processing, degraded in a proteasome-independent fashion in the absence of viral infection but in a proteasome-dependent fashion following exposure to restriction sensitive virus. Post-translationally, autoubiquitinated in a RING finger- and UBE2D2-dependent manner. Monoubiquitinated by TRIM21. Deubiquitinated by Yersinia YopJ. Ubiquitination may not lead to proteasomal degradation.

Its subcellular location is the cytoplasm. It localises to the nucleus. The enzyme catalyses S-ubiquitinyl-[E2 ubiquitin-conjugating enzyme]-L-cysteine + [acceptor protein]-L-lysine = [E2 ubiquitin-conjugating enzyme]-L-cysteine + N(6)-ubiquitinyl-[acceptor protein]-L-lysine.. It participates in protein modification; protein ubiquitination. Its function is as follows. Capsid-specific restriction factor that prevents infection from non-host-adapted retroviruses. Blocks viral replication early in the life cycle, after viral entry but before reverse transcription. In addition to acting as a capsid-specific restriction factor, also acts as a pattern recognition receptor that activates innate immune signaling in response to the retroviral capsid lattice. Binding to the viral capsid triggers its E3 ubiquitin ligase activity, and in concert with the heterodimeric ubiquitin conjugating enzyme complex UBE2V1-UBE2N (also known as UBC13-UEV1A complex) generates 'Lys-63'-linked polyubiquitin chains, which in turn are catalysts in the autophosphorylation of the MAP3K7/TAK1 complex (includes TAK1, TAB2, and TAB3). Activation of the MAP3K7/TAK1 complex by autophosphorylation results in the induction and expression of NF-kappa-B and MAPK-responsive inflammatory genes, thereby leading to an innate immune response in the infected cell. Plays a role in regulating autophagy through activation of autophagy regulator BECN1 by causing its dissociation from its inhibitors BCL2 and TAB2. The polypeptide is Tripartite motif-containing protein 5 (TRIM5) (Cebuella pygmaea (Pygmy marmoset)).